The primary structure comprises 706 residues: Axin-related protein (706 aa).

The 120-residue stretch at 72-191 folds into the RGS domain; it reads SLNLLLDDQD…LQSDICKEYA (120 aa). Disordered stretches follow at residues 278-298, 400-482, and 585-605; these read MTDGSVDGIPPYRSKKQREIH, TPAN…GTSA, and STTLKEKGKTAESVPSSGFST. A compositionally biased stretch (polar residues) spans 402-412; it reads ANLSPRSQSPF. Low complexity predominate over residues 453–462; it reads RSSVSSQLPR. One can recognise a DIX domain in the interval 624–706; it reads GQGLAIVYYF…KIICKVERAC (83 aa).

In terms of assembly, interacts with dvl2/dsh via DIX domains in both proteins. Forms a complex with ctnnb1/beta-catenin and gsk3b. Also forms heterodimers with mouse Axin1.

It is found in the cytoplasm. The protein localises to the cytoplasmic vesicle. In terms of biological role, regulates the wnt signaling pathway by interacting with dvl2/dsh, which displaces gsk3b from the axnr-gsk3b complex and thus prevents degradation of ctnnb1/beta-catenin. The protein is Axin-related protein of Xenopus laevis (African clawed frog).